The chain runs to 815 residues: Phenylalanine--tRNA ligase beta subunit (815 aa).

The tRNA-binding domain occupies 39–148 (ATELQKFEVA…EYAVVGDNFT (110 aa)). A B5 domain is found at 420–495 (LQKIPLDFSV…RIYGYDKIES (76 aa)). Mg(2+)-binding residues include Asp473, Asp479, Glu482, and Glu483. An FDX-ACB domain is found at 721–814 (SDFQANFRDY…ISQKFQGTLR (94 aa)).

The protein belongs to the phenylalanyl-tRNA synthetase beta subunit family. Type 1 subfamily. In terms of assembly, tetramer of two alpha and two beta subunits. It depends on Mg(2+) as a cofactor.

It is found in the cytoplasm. The catalysed reaction is tRNA(Phe) + L-phenylalanine + ATP = L-phenylalanyl-tRNA(Phe) + AMP + diphosphate + H(+). This chain is Phenylalanine--tRNA ligase beta subunit, found in Rickettsia typhi (strain ATCC VR-144 / Wilmington).